A 222-amino-acid chain; its full sequence is MYAVFGLTRSEVTPHEAAAARYKHRGVIDRRGAAMTSRRAPDGGLNLDDFMRRQRGRHLDLPYPRGYTLFVCDVEETILTPRDVEYWKLLVVTQGQLRVIGTIGLANLFSWDRSVAGVAADGSVLCYEISRENFVVRAADSLPQLLERGLLHSYFEDVERAAQGRLRHGNRSGLRRDADGQVIRESACYVSRALLRHRVTPGKQEITDAMFEAGNVPSALLP.

The protein belongs to the herpesviridae US22 family. In terms of assembly, interacts with UL25. Interacts with ISGylation machinery components ISG15, UBA7 and HERC5; these interactions inhibit global protein ISGylation. Post-translationally, ISGylated; ISGylation regulates UL26 stability and inhibits its activities to suppress NF-kappa-B signaling.

The protein localises to the virion tegument. It is found in the host nucleus. In terms of biological role, plays a role in the inhibition of host NF-kappa-B. This inhibition affects both the canonical and the non-canonical pathways. Blocks the induction of host IKK phosphorylation. May also influence the normal phosphorylation state of several tegument proteins including pp28 in virions. Also suppresses virus-induced ISGylation independent of its own ISGylation. This chain is Tegument protein UL26 (UL26), found in Homo sapiens (Human).